Consider the following 156-residue polypeptide: Small ribosomal subunit protein uS7 (156 aa).

It belongs to the universal ribosomal protein uS7 family. As to quaternary structure, part of the 30S ribosomal subunit. Contacts proteins S9 and S11.

Functionally, one of the primary rRNA binding proteins, it binds directly to 16S rRNA where it nucleates assembly of the head domain of the 30S subunit. Is located at the subunit interface close to the decoding center, probably blocks exit of the E-site tRNA. The sequence is that of Small ribosomal subunit protein uS7 from Nitrosospira multiformis (strain ATCC 25196 / NCIMB 11849 / C 71).